We begin with the raw amino-acid sequence, 431 residues long: Nuclear receptor subfamily 1 group I member 2 (431 aa).

2 NR C4-type zinc fingers span residues 38–58 (CRVCGDKANGYHFNVMTCEGC) and 74–99 (CPFRKGTCEITRKTRRQCQACRLRKC). A DNA-binding region (nuclear receptor) is located at residues 38-104 (CRVCGDKANG…RLRKCLESGM (67 aa)). The Bipartite nuclear localization signal signature appears at 63–89 (RRAMKRNVRLRCPFRKGTCEITRKTRR). A hinge region spans residues 105–142 (KKEMIMSDAAVEQRRALIKRKKREKIEAPPPGGQGLTE). One can recognise an NR LBD domain in the interval 143-430 (EQQALIQELM…LMQELFSSTD (288 aa)). Hyperforin contacts are provided by residues S244 and 282 to 285 (ILRF).

The protein belongs to the nuclear hormone receptor family. NR1 subfamily. In terms of assembly, heterodimer with RXRA. Interacts with NCOA1. Interacts (via domain NR LBD) with CRY1 and CRY2 in a ligand-dependent manner.

It localises to the nucleus. Functionally, nuclear receptor that binds and is activated by a variety of endogenous and xenobiotic compounds. Transcription factor that activates the transcription of multiple genes involved in the metabolism and secretion of potentially harmful xenobiotics, endogenous compounds and drugs. Response to specific ligands is species-specific, due to differences in the ligand-binding domain. Activated by naturally occurring steroids, such as pregnenolone and progesterone. Binds to a response element in the promoters of the CYP3A4 and ABCB1/MDR1 genes. This chain is Nuclear receptor subfamily 1 group I member 2 (Nr1i2), found in Rattus norvegicus (Rat).